The chain runs to 2370 residues: Genome polyprotein (2370 aa).

The N-myristoyl glycine; by host moiety is linked to residue Gly-112. Disordered regions lie at residues 140 to 173 (VGDM…GNVV) and 704 to 736 (GADG…FDYP). Residues 154 to 171 (GSNKGGSSTSPKSTSNGN) show a composition bias toward low complexity. Over residues 713–725 (APTSDLSDGNPTT) the composition is skewed to polar residues. Residues 1358 to 1522 (YSTALSAISL…AAFSAAAALK (165 aa)) enclose the SF3 helicase domain. 1384–1391 (GPPGTGKS) is a binding site for ATP. A lipid anchor (N-myristoyl glycine; by host) is attached at Gly-1597. Residues 1646–1666 (IFAASSFLSLIAATLTIVRCL) traverse the membrane as a helical segment. The disordered stretch occupies residues 1674–1696 (GAYSGTPVPKPRKKDLPKQPVYS). Position 1676 is an O-(5'-phospho-RNA)-tyrosine (Tyr-1676). The Peptidase C3 domain maps to 1697-1886 (GPVRRQGFDP…FSARLTPERV (190 aa)). Residues His-1745, Glu-1776, and Cys-1849 each act as for protease 3C activity in the active site. Residues 2007-2016 (SPGYPWTTQG) show a composition bias toward polar residues. The segment at 2007-2026 (SPGYPWTTQGRSRRSLFDED) is disordered. One can recognise a RdRp catalytic domain in the interval 2122-2239 (SNVWSIDYSC…GSNQDFHPRE (118 aa)). Residues Asp-2128 and Asp-2225 each act as for RdRp activity in the active site.

In terms of assembly, interacts with capsid protein VP1. Interacts with capsid protein VP3. Interacts with capsid protein VP0. Interacts with capsid protein VP3. As to quaternary structure, interacts with capsid protein VP0. Interacts with capsid protein VP1. In terms of assembly, homodimer. Interacts with protein 2B. Interacts with protein 2C. Homodimer. Interacts with host ABCD3. Interacts with protein 2A. Interacts with host ACBD3. As to quaternary structure, homodimer. Interacts with host ABCD3. Interacts with protein 2A. Interacts with protein 3A. Interacts with protein 3C. Interacts with host ACBD3. In terms of assembly, homodimer. Interacts with host ABCD3 (via GOLD domain) and PI4KB; these interactions allow the formation of a viral protein/ACBD3/PI4KB complex in order to synthesize PI4P at the viral RNA replication sites. Interacts with protein 2C. Interacts with protein 3C. Protein 3C: Interacts with protein 2A. Protein 3C: Interacts with protein 2C. Post-translationally, specific enzymatic cleavages by the viral protease in vivo yield a variety of precursors and mature proteins. The leader protein-VP0 junction is cleaved by 3C proteinase. The VP1/2A junction is cleaved by the protein 3CD in association with protein 2A. Uridylylated by the polymerase and is covalently linked to the 5'-end of genomic RNA. This uridylylated form acts as a nucleotide-peptide primer for the polymerase.

The protein resides in the virion. The protein localises to the host cytoplasm. It localises to the host cytoplasmic vesicle membrane. Its subcellular location is the host Golgi apparatus membrane. It catalyses the reaction RNA(n) + a ribonucleoside 5'-triphosphate = RNA(n+1) + diphosphate. It carries out the reaction Selective cleavage of Gln-|-Gly bond in the poliovirus polyprotein. In other picornavirus reactions Glu may be substituted for Gln, and Ser or Thr for Gly.. The enzyme catalyses ATP + H2O = ADP + phosphate + H(+). Its function is as follows. Required for viral RNA replication and viral RNA encapsidation. Does not have any proteolytic activity. Forms an icosahedral capsid of pseudo T=3 symmetry with capsid proteins VP0 and VP3. Together they form an icosahedral capsid composed of 60 copies of each VP0, VP1, and VP3. All the three latter proteins contain a beta-sheet structure called beta-barrel jelly roll. In terms of biological role, forms an icosahedral capsid of pseudo T=3 symmetry with capsid proteins VP1 and VP3. Together they form an icosahedral capsid composed of 60 copies of each VP0, VP1, and VP3. All the three latter proteins contain a beta-sheet structure called beta-barrel jelly roll. Functionally, forms an icosahedral capsid of pseudo T=3 symmetry with capsid proteins VP0 and VP1. Together they form an icosahedral capsid composed of 60 copies of each VP0, VP1, and VP3. All the three latter proteins contain a beta-sheet structure called beta-barrel jelly roll. Its function is as follows. Required for viral RNA replication. Does not have any proteolytic activity. Affects membrane integrity and causes an increase in membrane permeability. In terms of biological role, induces and associates with structural rearrangements of intracellular membranes. Displays RNA-binding, nucleotide binding and NTPase activities. May play a role in virion morphogenesis and viral RNA encapsidation by interacting with the capsid protein VP3. Functionally, serves as membrane anchor via its hydrophobic domain. Plays an essential role in viral RNA replication by recruiting PI4KB at the viral replication sites, thereby allowing the formation of rearranged membranous structures where viral replication takes place. Its function is as follows. Forms a primer, VPg-pU, which is utilized by the polymerase for the initiation of RNA chains. Cysteine protease that generates mature viral proteins from the precursor polyprotein. In addition to its proteolytic activity, it binds to viral RNA, and thus influences viral genome replication. RNA and substrate cooperatively bind to the protease. In terms of biological role, replicates the genomic and antigenomic RNAs by recognizing replications specific signals. Performs VPg uridylylation. The protein is Genome polyprotein of Homo sapiens (Human).